Reading from the N-terminus, the 164-residue chain is Cyclin-dependent kinase inhibitor 1 (164 aa).

Residue serine 2 is modified to N-acetylserine. Serine 2 is covalently cross-linked (Glycyl serine ester (Ser-Gly) (interchain with G-Cter in ubiquitin)). A C4-type zinc finger spans residues 13-41; the sequence is CGSKACRRLFGPVDSEQLSRDCDALMAGC. The tract at residues 17-24 is required for binding cyclins; it reads ACRRLFGP. Residues 53 to 58 are required for binding CDKs; sequence FVTETP. Residues 76 to 164 form a disordered region; sequence LYLPTGPRRG…RRLIFSKRKP (89 aa). Threonine 80 bears the Phosphothreonine; by LKB1 mark. A Phosphoserine; by GSK3-beta modification is found at serine 114. Residue serine 130 is modified to Phosphoserine. The short motif at 140 to 164 is the PIP-box K+4 motif element; sequence RKRRQTSMTDFYHSKRRLIFSKRKP. A Nuclear localization signal motif is present at residues 141-156; that stretch reads KRRQTSMTDFYHSKRR. Position 145 is a phosphothreonine; by PKA, PKB/AKT1, PIM1 and PIM2 (threonine 145). Serine 146 bears the Phosphoserine; by PKC and NUAK1 mark. The interaction with TRIM39 stretch occupies residues 152–164; sequence HSKRRLIFSKRKP. The segment covering 153 to 164 has biased composition (basic residues); that stretch reads SKRRLIFSKRKP. Serine 160 is modified (phosphoserine; by PKC; in vitro).

Belongs to the CDI family. As to quaternary structure, interacts with HDAC1; the interaction is prevented by competitive binding of C10orf90/FATS to HDAC1 facilitating acetylation and protein stabilization of CDKN1A/p21. Interacts with MKRN1. Interacts with PSMA3. Interacts with PCNA. Component of the ternary complex, cyclin D-CDK4-CDKN1A. Interacts (via its N-terminal domain) with CDK4; the interaction promotes the assembly of the cyclin D-CDK4 complex, its nuclear translocation and promotes the cyclin D-dependent enzyme activity of CDK4. Binding to CDK2 leads to CDK2/cyclin E inactivation at the G1-S phase DNA damage checkpoint, thereby arresting cells at the G1-S transition during DNA repair. Interacts with PIM1. Interacts with STK11 and NUAK1. Interacts wih DTL. Interacts with isoform 1 and isoform 2 of TRIM39. Interacts with PKP3; the interaction sequesters CDKN1A to the cytoplasm thereby repressing its role as an inhibitor of CDK4- and CDK6-driven RB1 phosphorylation. In terms of processing, phosphorylation of Thr-145 by Akt or of Ser-146 by PKC impairs binding to PCNA. Phosphorylation at Ser-114 by GSK3-beta enhances ubiquitination by the DCX(DTL) complex. Phosphorylation of Thr-145 by PIM2 enhances CDKN1A stability and inhibits cell proliferation. Phosphorylation of Thr-145 by PIM1 results in the relocation of CDKN1A to the cytoplasm and enhanced CDKN1A protein stability. UV radiation-induced phosphorylation at Thr-80 by LKB1 and at Ser-146 by NUAK1 leads to its degradation. Post-translationally, ubiquitinated by MKRN1; leading to polyubiquitination and 26S proteasome-dependent degradation. Ubiquitinated by the DCX(DTL) complex, also named CRL4(CDT2) complex, leading to its degradation during S phase or following UV irradiation. Ubiquitination by the DCX(DTL) complex is essential to control replication licensing and is PCNA-dependent: interacts with PCNA via its PIP-box, while the presence of the containing the 'K+4' motif in the PIP box, recruit the DCX(DTL) complex, leading to its degradation. Ubiquitination at Ser-2 leads to degradation by the proteasome pathway. Ubiquitinated by RNF114; leading to proteasomal degradation. Acetylation leads to protein stability. Acetylated in vitro on Lys-141, Lys-154, Lys-161 and Lys-163. Deacetylation by HDAC1 is prevented by competitive binding of C10orf90/FATS to HDAC1. In terms of tissue distribution, expressed in all adult tissues, with 5-fold lower levels observed in the brain.

The protein resides in the cytoplasm. Its subcellular location is the nucleus. Plays an important role in controlling cell cycle progression and DNA damage-induced G2 arrest. Involved in p53/TP53 mediated inhibition of cellular proliferation in response to DNA damage. Also involved in p53-independent DNA damage-induced G2 arrest mediated by CREB3L1 in astrocytes and osteoblasts. Binds to and inhibits cyclin-dependent kinase activity, preventing phosphorylation of critical cyclin-dependent kinase substrates and blocking cell cycle progression. Functions in the nuclear localization and assembly of cyclin D-CDK4 complex and promotes its kinase activity towards RB1. At higher stoichiometric ratios, inhibits the kinase activity of the cyclin D-CDK4 complex. Inhibits DNA synthesis by DNA polymerase delta by competing with POLD3 for PCNA binding. Negatively regulates the CDK4- and CDK6-driven phosphorylation of RB1 in keratinocytes, thereby resulting in the release of E2F1 and subsequent transcription of E2F1-driven G1/S phase promoting genes. This chain is Cyclin-dependent kinase inhibitor 1, found in Homo sapiens (Human).